The chain runs to 329 residues: 4-hydroxythreonine-4-phosphate dehydrogenase (329 aa).

Residues H136 and T137 each coordinate substrate. 3 residues coordinate a divalent metal cation: H166, H211, and H266. K274, N283, and R292 together coordinate substrate.

This sequence belongs to the PdxA family. As to quaternary structure, homodimer. Requires Zn(2+) as cofactor. Mg(2+) serves as cofactor. It depends on Co(2+) as a cofactor.

Its subcellular location is the cytoplasm. It catalyses the reaction 4-(phosphooxy)-L-threonine + NAD(+) = 3-amino-2-oxopropyl phosphate + CO2 + NADH. It participates in cofactor biosynthesis; pyridoxine 5'-phosphate biosynthesis; pyridoxine 5'-phosphate from D-erythrose 4-phosphate: step 4/5. Its function is as follows. Catalyzes the NAD(P)-dependent oxidation of 4-(phosphooxy)-L-threonine (HTP) into 2-amino-3-oxo-4-(phosphooxy)butyric acid which spontaneously decarboxylates to form 3-amino-2-oxopropyl phosphate (AHAP). This Pseudomonas putida (strain ATCC 47054 / DSM 6125 / CFBP 8728 / NCIMB 11950 / KT2440) protein is 4-hydroxythreonine-4-phosphate dehydrogenase.